The following is a 130-amino-acid chain: Small ribosomal subunit protein uS11 (130 aa).

It belongs to the universal ribosomal protein uS11 family. As to quaternary structure, part of the 30S ribosomal subunit. Interacts with proteins S7 and S18. Binds to IF-3.

In terms of biological role, located on the platform of the 30S subunit, it bridges several disparate RNA helices of the 16S rRNA. Forms part of the Shine-Dalgarno cleft in the 70S ribosome. The chain is Small ribosomal subunit protein uS11 from Phytoplasma mali (strain AT).